A 253-amino-acid polypeptide reads, in one-letter code: Tetraspanin-11 (253 aa).

The next 4 helical transmembrane spans lie at 19-39 (LLFI…AVGV), 63-83 (ILIF…GAVI), 90-110 (LSAY…AGVL), and 220-240 (LLLM…GMIL).

This sequence belongs to the tetraspanin (TM4SF) family.

The protein localises to the membrane. The sequence is that of Tetraspanin-11 (TSPAN11) from Bos taurus (Bovine).